A 312-amino-acid chain; its full sequence is Olfactory receptor 867 (312 aa).

Residues 1-6 (MILNCN) lie on the Extracellular side of the membrane. The chain crosses the membrane as a helical span at residues 7 to 30 (PFSGLFLSMYLVTVLGNLLIILAV). The Cytoplasmic segment spans residues 31-38 (SSNSHLHN). A helical membrane pass occupies residues 39-60 (LMYFFLSNLSFVDICFISTTIP). Residues 61-81 (KMLVNIHSQTKDISYIECLSQ) are Extracellular-facing. Cysteine 78 and cysteine 160 are oxidised to a cystine. A helical transmembrane segment spans residues 82-101 (VYFLTTFGGMDNFLLTLMAC). Over 102–120 (DRYVAICHPLNYTVIMNLQ) the chain is Cytoplasmic. The helical transmembrane segment at 121–139 (LCALLILMFWLIMFCVSLI) threads the bilayer. Residues 140–177 (HVLLMNELNFSRGTEIPHFFCELAQVLKVANSDTHINN) are Extracellular-facing. Asparagine 148 carries N-linked (GlcNAc...) asparagine glycosylation. The chain crosses the membrane as a helical span at residues 178–200 (VFMYVVTSLLGLIPMTGILMSYS). The Cytoplasmic portion of the chain corresponds to 201-217 (QIASSLLKMSSSVSKYK). A helical membrane pass occupies residues 218–241 (AFSTCGSHLCVVSLFYGSATIVYF). The Extracellular segment spans residues 242 to 253 (CSSVLHSTHKKM). The helical transmembrane segment at 254–273 (IASLMYTVISPMLNPFIYSL) threads the bilayer. Residues 274 to 312 (RNKDVKGALGKLFIRVASCPLWSKDFRPKFILKPERQSL) lie on the Cytoplasmic side of the membrane.

Belongs to the G-protein coupled receptor 1 family. Epithelium of the tongue; including the taste buds.

The protein resides in the cell membrane. Functionally, possible olfactory or taste receptor. This chain is Olfactory receptor 867 (Olr867), found in Rattus norvegicus (Rat).